The primary structure comprises 224 residues: PKHD-type hydroxylase CYB_2270 (224 aa).

A Fe2OG dioxygenase domain is found at 78–176; it reads LIHSILISCY…RYAAVSWVQS (99 aa). Residues H96, D98, and H157 each coordinate Fe cation. 2-oxoglutarate is bound at residue R167.

It depends on Fe(2+) as a cofactor. The cofactor is L-ascorbate.

This chain is PKHD-type hydroxylase CYB_2270, found in Synechococcus sp. (strain JA-2-3B'a(2-13)) (Cyanobacteria bacterium Yellowstone B-Prime).